Reading from the N-terminus, the 467-residue chain is Nuclear distribution protein nudF (467 aa).

Residues 9-41 enclose the LisH domain; sequence QAEELHKSIIAYLASVNLTESSAALRAELGDSV. Positions 60–87 form a coiled coil; that stretch reads TSVVRLQKKIMDLESRCAALQSELDSAT. WD repeat units lie at residues 113-154, 156-196, 200-247, 250-289, 292-352, 354-393, 398-428, and 429-466; these read GHRN…RTVK, HTKA…KNIR, GHDH…CVKT, GHVD…TKST, GHEH…IKTL, GHDN…KCVR, AHGH…NGTP, and AATS…RIFA. The segment at 417–439 is disordered; that stretch reads GANGEAETNGTPAATSTTNGVRP. Residues 422 to 436 are compositionally biased toward polar residues; it reads AETNGTPAATSTTNG.

This sequence belongs to the WD repeat LIS1/nudF family. Self-associates. Interacts with nudE and dynein.

It localises to the cytoplasm. The protein localises to the cytoskeleton. The protein resides in the spindle pole. Functionally, positively regulates the activity of the minus-end directed microtubule motor protein dynein. May enhance dynein-mediated microtubule sliding by targeting dynein to the microtubule plus end. Required for nuclear migration during vegetative growth as well as development. Required for retrograde early endosome (EE) transport from the hyphal tip. Required for localization of dynein to the mitotic spindle poles. Recruits additional proteins to the dynein complex at SPBs. In Aspergillus fumigatus (strain CBS 144.89 / FGSC A1163 / CEA10) (Neosartorya fumigata), this protein is Nuclear distribution protein nudF.